Consider the following 439-residue polypeptide: Omega-aminotransferase (439 aa).

G112–S113 contacts pyridoxal 5'-phosphate. The residue at position 281 (K281) is an N6-(pyridoxal phosphate)lysine. T318 contacts pyridoxal 5'-phosphate.

Belongs to the class-III pyridoxal-phosphate-dependent aminotransferase family. As to quaternary structure, homotetramer. It depends on pyridoxal 5'-phosphate as a cofactor.

It carries out the reaction 3-oxopropanoate + L-alanine = beta-alanine + pyruvate. The enzyme catalyses 3-aminobutanoate + pyruvate = acetoacetate + L-alanine. It catalyses the reaction benzylamine + pyruvate = benzaldehyde + L-alanine. The catalysed reaction is (S)-1-phenylethylamine + pyruvate = acetophenone + L-alanine. It carries out the reaction 2-phenylethylamine + pyruvate = 2-phenylacetaldehyde + L-alanine. The enzyme catalyses 1-phenylpropylamine + pyruvate = 1-phenylpropan-1-one + L-alanine. It catalyses the reaction 3-phenylpropylamine + pyruvate = 3-phenylpropanal + L-alanine. Aminotransferase that can use beta-amino acids, aliphatic amines, or aromatic amines as amino donors, and pyruvate as amino acceptor. Shows high activity for short-chain beta-amino acids, with the highest activity for 3-aminobutanoate and beta-alanine in vitro. Displays higher activity toward aromatic amines than aliphatic amines. May be involved in beta-alanine biosynthesis and/or degradation. In Caulobacter vibrioides (strain ATCC 19089 / CIP 103742 / CB 15) (Caulobacter crescentus), this protein is Omega-aminotransferase.